A 79-amino-acid chain; its full sequence is Calcium/calmodulin-dependent protein kinase II inhibitor 2 (79 aa).

Residues 43–69 (KRPPKLGQIGRAKRVVIEDDRIDEVLK) form an inhibitory domain region.

It belongs to the CAMK2N family.

It localises to the nucleus. It is found in the cytoplasm. Its subcellular location is the cytosol. Its function is as follows. Potent and specific cellular inhibitor of CaM-kinase II (CAMK2). Traps Ca(2+)/calmodulin on CAMK2. In Xenopus tropicalis (Western clawed frog), this protein is Calcium/calmodulin-dependent protein kinase II inhibitor 2 (camk2n2).